Here is a 110-residue protein sequence, read N- to C-terminus: Large ribosomal subunit protein uL22 (110 aa).

The protein belongs to the universal ribosomal protein uL22 family. In terms of assembly, part of the 50S ribosomal subunit.

In terms of biological role, this protein binds specifically to 23S rRNA; its binding is stimulated by other ribosomal proteins, e.g. L4, L17, and L20. It is important during the early stages of 50S assembly. It makes multiple contacts with different domains of the 23S rRNA in the assembled 50S subunit and ribosome. Its function is as follows. The globular domain of the protein is located near the polypeptide exit tunnel on the outside of the subunit, while an extended beta-hairpin is found that lines the wall of the exit tunnel in the center of the 70S ribosome. This chain is Large ribosomal subunit protein uL22, found in Teredinibacter turnerae (strain ATCC 39867 / T7901).